The primary structure comprises 153 residues: UPF0260 protein CKO_01185 (153 aa).

Belongs to the UPF0260 family.

In Citrobacter koseri (strain ATCC BAA-895 / CDC 4225-83 / SGSC4696), this protein is UPF0260 protein CKO_01185.